A 396-amino-acid chain; its full sequence is Elongation factor Tu (396 aa).

A tr-type G domain is found at 10–206 (KPHCNIGTIG…AVDAYIPQPE (197 aa)). The G1 stretch occupies residues 19–26 (GHVDHGKT). 19–26 (GHVDHGKT) is a binding site for GTP. Mg(2+) is bound at residue T26. The tract at residues 60 to 64 (GITIS) is G2. Residues 81-84 (DCPG) are G3. GTP is bound by residues 81-85 (DCPGH) and 136-139 (NKVD). The interval 136 to 139 (NKVD) is G4. The interval 174 to 176 (SAL) is G5.

This sequence belongs to the TRAFAC class translation factor GTPase superfamily. Classic translation factor GTPase family. EF-Tu/EF-1A subfamily. As to quaternary structure, monomer.

The protein localises to the cytoplasm. The catalysed reaction is GTP + H2O = GDP + phosphate + H(+). In terms of biological role, GTP hydrolase that promotes the GTP-dependent binding of aminoacyl-tRNA to the A-site of ribosomes during protein biosynthesis. The protein is Elongation factor Tu of Gluconacetobacter diazotrophicus (strain ATCC 49037 / DSM 5601 / CCUG 37298 / CIP 103539 / LMG 7603 / PAl5).